The following is a 696-amino-acid chain: Elongation factor G (696 aa).

The region spanning 8–288 (EDYRNFGIMA…AVVEYLPSPA (281 aa)) is the tr-type G domain. Residues 17–24 (AHIDAGKT), 86–90 (DTPGH), and 140–143 (NKMD) each bind GTP.

Belongs to the TRAFAC class translation factor GTPase superfamily. Classic translation factor GTPase family. EF-G/EF-2 subfamily.

The protein localises to the cytoplasm. Its function is as follows. Catalyzes the GTP-dependent ribosomal translocation step during translation elongation. During this step, the ribosome changes from the pre-translocational (PRE) to the post-translocational (POST) state as the newly formed A-site-bound peptidyl-tRNA and P-site-bound deacylated tRNA move to the P and E sites, respectively. Catalyzes the coordinated movement of the two tRNA molecules, the mRNA and conformational changes in the ribosome. The protein is Elongation factor G of Mesorhizobium japonicum (strain LMG 29417 / CECT 9101 / MAFF 303099) (Mesorhizobium loti (strain MAFF 303099)).